The following is an 86-amino-acid chain: Large ribosomal subunit protein bL27 (86 aa).

Gly residues predominate over residues 1–10 (MAQKKGGGST). Positions 1–20 (MAQKKGGGSTRNGRDSESKR) are disordered.

This sequence belongs to the bacterial ribosomal protein bL27 family.

The polypeptide is Large ribosomal subunit protein bL27 (Polynucleobacter necessarius subsp. necessarius (strain STIR1)).